Here is a 1037-residue protein sequence, read N- to C-terminus: Outer dynein arm-docking complex subunit 2 (1037 aa).

2 stretches are compositionally biased toward basic and acidic residues: residues 316-334 (EEQQ…EDGH) and 376-391 (SSIK…KLEK). 2 disordered regions span residues 316–353 (EEQQ…FGKS) and 376–439 (SSIK…ANAD). ARM repeat units follow at residues 477–516 (ETCQ…EISH), 518–557 (PQIR…NVAK), 528–570 (GGLP…QHGG), 615–654 (HSNK…ECAS), 656–695 (ENYR…QCAE), 739–778 (KENV…ECCQ), 821–860 (PESM…PCIE), 864–903 (DAGE…NIAK), 905–944 (QENL…RCCM), and 946–985 (GRNR…QLSE). The residue at position 545 (Lys545) is an N6-methyllysine.

As to quaternary structure, component of the outer dynein arm-docking complex along with ODAD1, ODAD3, and ODAD4. Interacts with CFAP61. As to expression, highly expressed in testis. In males, also detected at lower levels in lung, brain, liver and muscle. In females, detected in ovary.

The protein resides in the cytoplasm. It localises to the cytoskeleton. It is found in the cilium axoneme. The protein localises to the cilium basal body. Functionally, component of the outer dynein arm-docking complex (ODA-DC) that mediates outer dynein arms (ODA) binding onto the doublet microtubule. Involved in mediating assembly of both ODAs and their axonemal docking complex onto ciliary microtubules. In Mus musculus (Mouse), this protein is Outer dynein arm-docking complex subunit 2.